We begin with the raw amino-acid sequence, 134 residues long: Small ribosomal subunit protein uS8c (134 aa).

This sequence belongs to the universal ribosomal protein uS8 family. Part of the 30S ribosomal subunit.

The protein resides in the plastid. Its subcellular location is the chloroplast. One of the primary rRNA binding proteins, it binds directly to 16S rRNA central domain where it helps coordinate assembly of the platform of the 30S subunit. This chain is Small ribosomal subunit protein uS8c (rps8), found in Phaseolus angularis (Azuki bean).